A 368-amino-acid polypeptide reads, in one-letter code: tRNA-specific 2-thiouridylase MnmA (368 aa).

Residues 11 to 18 and methionine 37 contribute to the ATP site; that span reads GMSGGVDS. Residues 97–99 form an interaction with target base in tRNA region; it reads NPD. Catalysis depends on cysteine 102, which acts as the Nucleophile. A disulfide bridge links cysteine 102 with cysteine 199. Glycine 127 is a binding site for ATP. An interaction with tRNA region spans residues 149–151; that stretch reads KDQ. Cysteine 199 serves as the catalytic Cysteine persulfide intermediate. The segment at 311-312 is interaction with tRNA; that stretch reads RY.

The protein belongs to the MnmA/TRMU family. In terms of assembly, interacts with TusE.

The protein localises to the cytoplasm. It catalyses the reaction S-sulfanyl-L-cysteinyl-[protein] + uridine(34) in tRNA + AH2 + ATP = 2-thiouridine(34) in tRNA + L-cysteinyl-[protein] + A + AMP + diphosphate + H(+). Functionally, catalyzes the 2-thiolation of uridine at the wobble position (U34) of tRNA(Lys), tRNA(Glu) and tRNA(Gln), leading to the formation of s(2)U34, the first step of tRNA-mnm(5)s(2)U34 synthesis. Sulfur is provided by IscS, via a sulfur-relay system. Binds ATP and its substrate tRNAs. The sequence is that of tRNA-specific 2-thiouridylase MnmA from Shigella dysenteriae serotype 1 (strain Sd197).